The primary structure comprises 139 residues: Large ribosomal subunit protein uL16 (139 aa).

Basic residues predominate over residues 1–16; that stretch reads MLIPKRTKYRKQHRPV. The segment at 1–22 is disordered; the sequence is MLIPKRTKYRKQHRPVRSGMSK.

Belongs to the universal ribosomal protein uL16 family. In terms of assembly, part of the 50S ribosomal subunit.

Binds 23S rRNA and is also seen to make contacts with the A and possibly P site tRNAs. The protein is Large ribosomal subunit protein uL16 of Bifidobacterium longum (strain DJO10A).